A 484-amino-acid polypeptide reads, in one-letter code: Nuclear rim protein 1 (484 aa).

The residue at position 3 (S3) is a Phosphoserine. 2 helical membrane passes run 145–165 (FTIFILLSLNLYVSCKFMFGY) and 252–272 (TAIVFLSFSDVSFTSAIAIVF). Positions 416 to 457 (SSNENLEKGGAFLPNQDQNRPSKSLSPLRKTPLSARQKRFEG) are disordered. At S417 the chain carries Phosphoserine. The segment covering 430–440 (NQDQNRPSKSL) has biased composition (polar residues). S474 carries the phosphoserine modification.

The protein belongs to the NUR1 family. As to quaternary structure, interacts with CSM1.

The protein localises to the nucleus membrane. Member of a perinuclear network that controls recombination at multiple loci to maintain genome stability. Required for rDNA repeat stability. The polypeptide is Nuclear rim protein 1 (NUR1) (Saccharomyces cerevisiae (strain Lalvin EC1118 / Prise de mousse) (Baker's yeast)).